A 347-amino-acid chain; its full sequence is 3-methyl-2-oxobutanoate hydroxymethyltransferase 1, mitochondrial (347 aa).

Residues 1–48 constitute a mitochondrion transit peptide; the sequence is MASSLTRNCSRFSKAISVRFMSNLPENTVYGGPKPQNPNQRVTLTHLR. The Mg(2+) site is built by Asp83 and Asp122. Residues 83 to 84, Asp122, and Lys152 each bind 3-methyl-2-oxobutanoate; that span reads DS. Glu154 serves as a coordination point for Mg(2+). The Proton acceptor role is filled by Glu222.

It belongs to the PanB family. Mg(2+) is required as a cofactor.

Its subcellular location is the mitochondrion. It carries out the reaction 3-methyl-2-oxobutanoate + (6R)-5,10-methylene-5,6,7,8-tetrahydrofolate + H2O = 2-dehydropantoate + (6S)-5,6,7,8-tetrahydrofolate. The protein operates within cofactor biosynthesis; (R)-pantothenate biosynthesis; (R)-pantoate from 3-methyl-2-oxobutanoate: step 1/2. In terms of biological role, catalyzes the reversible reaction in which hydroxymethyl group from 5,10-methylenetetrahydrofolate is transferred onto alpha-ketoisovalerate to form ketopantoate. The chain is 3-methyl-2-oxobutanoate hydroxymethyltransferase 1, mitochondrial (KPHMT1) from Arabidopsis thaliana (Mouse-ear cress).